The chain runs to 407 residues: Phospholipase A1-II 7 (407 aa).

Ser-230 serves as the catalytic Acyl-ester intermediate. Catalysis depends on charge relay system residues Ser-230, Asp-299, and His-336.

The protein belongs to the AB hydrolase superfamily. Lipase family.

The protein resides in the cytoplasm. In terms of biological role, acylhydrolase that catalyzes the hydrolysis of phospholipids at the sn-1 position. In Oryza sativa subsp. indica (Rice), this protein is Phospholipase A1-II 7.